The chain runs to 257 residues: Phosphate import ATP-binding protein PstB (257 aa).

The 242-residue stretch at 11–252 (LEVRDLNFFY…PQKKATEDYI (242 aa)) folds into the ABC transporter domain. ATP is bound at residue 43–50 (GPSGCGKS).

It belongs to the ABC transporter superfamily. Phosphate importer (TC 3.A.1.7) family. The complex is composed of two ATP-binding proteins (PstB), two transmembrane proteins (PstC and PstA) and a solute-binding protein (PstS).

It localises to the cell inner membrane. It carries out the reaction phosphate(out) + ATP + H2O = ADP + 2 phosphate(in) + H(+). Its function is as follows. Part of the ABC transporter complex PstSACB involved in phosphate import. Responsible for energy coupling to the transport system. The protein is Phosphate import ATP-binding protein PstB of Chromobacterium violaceum (strain ATCC 12472 / DSM 30191 / JCM 1249 / CCUG 213 / NBRC 12614 / NCIMB 9131 / NCTC 9757 / MK).